The following is a 1046-amino-acid chain: Probable inorganic carbon transporter subunit DabA1 (1046 aa).

The Zn(2+) site is built by Cys-462, Asp-464, His-721, and Cys-736.

Belongs to the inorganic carbon transporter (TC 9.A.2) DabA family. In terms of assembly, forms a complex with DabB1. Zn(2+) is required as a cofactor.

The protein localises to the cell inner membrane. Its function is as follows. Part of an energy-coupled inorganic carbon pump. The sequence is that of Probable inorganic carbon transporter subunit DabA1 from Halothiobacillus neapolitanus (strain ATCC 23641 / c2) (Thiobacillus neapolitanus).